The sequence spans 1256 residues: Neuronal cell adhesion molecule (1256 aa).

The N-terminal stretch at 1 to 29 (MQLKIMPKKKHLSAGGVPLILFLCQMISA) is a signal peptide. Residues 30–1119 (LDVPLDLVQP…ASRQVDIATQ (1090 aa)) lie on the Extracellular side of the membrane. Ig-like C2-type domains are found at residues 40-128 (PTIT…AAVS) and 135-229 (PSRS…QPIS). Cystine bridges form between cysteine 62-cysteine 117 and cysteine 161-cysteine 212. A glycan (N-linked (GlcNAc...) asparagine) is linked at asparagine 77. N-linked (GlcNAc...) asparagine glycosylation is found at asparagine 217, asparagine 239, asparagine 245, asparagine 270, asparagine 308, and asparagine 371. 4 consecutive Ig-like C2-type domains span residues 261-350 (PPTF…ISVT), 355-442 (PYWI…AFVN), 448-535 (PRIL…VHLE), and 539-626 (PTRI…AVLR). An intrachain disulfide couples cysteine 286 to cysteine 334. Cysteines 376 and 426 form a disulfide. 2 N-linked (GlcNAc...) asparagine glycosylation sites follow: asparagine 427 and asparagine 501. 2 disulfide bridges follow: cysteine 470/cysteine 519 and cysteine 561/cysteine 610. N-linked (GlcNAc...) asparagine glycosylation is found at asparagine 613, asparagine 710, asparagine 796, asparagine 852, asparagine 987, asparagine 1003, asparagine 1013, and asparagine 1067. Fibronectin type-III domains lie at 643–738 (PPFD…TKAA), 740–837 (PDQN…SGED), 842–944 (APGN…TPEG), and 948–1045 (APSS…VDEA). Residues 1120–1142 (GWFIGLMCAVALLILILLIVCFI) traverse the membrane as a helical segment. Residues 1143–1256 (RRNKGGKYPV…SPVNAMNSFV (114 aa)) lie on the Cytoplasmic side of the membrane. The span at 1151-1171 (PVKEKEDAHADPEIQPMKEDD) shows a compositional bias: basic and acidic residues. Residues 1151-1256 (PVKEKEDAHA…SPVNAMNSFV (106 aa)) are disordered. Phosphothreonine is present on threonine 1173. At tyrosine 1177 the chain carries Phosphotyrosine. The residue at position 1178 (serine 1178) is a Phosphoserine. Basic and acidic residues predominate over residues 1193–1202 (PSDRTVKKED). A phosphoserine mark is found at serine 1203, serine 1206, serine 1223, serine 1242, serine 1243, and serine 1247. Polar residues predominate over residues 1240 to 1256 (NESSEAPSPVNAMNSFV).

The protein belongs to the immunoglobulin superfamily. L1/neurofascin/NgCAM family. As to quaternary structure, constituent of a NFASC/NRCAM/ankyrin-G complex. Detected in a complex with CNTN1 and PTPRB. Interacts with GLDN/gliomedin and MYOC. In terms of tissue distribution, detected in sciatic nerve. Detected in brain, especially in the cerebellum Purkinje cell layer, inner granule cell layer and molecular layer (at protein level). Detected in neurons and Schwann cells.

The protein localises to the cell membrane. The protein resides in the cell projection. Its subcellular location is the axon. It is found in the secreted. In terms of biological role, cell adhesion protein that is required for normal responses to cell-cell contacts in brain and in the peripheral nervous system. Plays a role in neurite outgrowth in response to contactin binding. Plays a role in mediating cell-cell contacts between Schwann cells and axons. Plays a role in the formation and maintenance of the nodes of Ranvier on myelinated axons. Nodes of Ranvier contain clustered sodium channels that are crucial for the saltatory propagation of action potentials along myelinated axons. During development, nodes of Ranvier are formed by the fusion of two heminodes. Required for normal clustering of sodium channels at heminodes; not required for the formation of mature nodes with normal sodium channel clusters. Required, together with GLDN, for maintaining NFASC and sodium channel clusters at mature nodes of Ranvier. The protein is Neuronal cell adhesion molecule (Nrcam) of Mus musculus (Mouse).